The following is a 122-amino-acid chain: Large ribosomal subunit protein uL14 (122 aa).

The protein belongs to the universal ribosomal protein uL14 family. As to quaternary structure, part of the 50S ribosomal subunit. Forms a cluster with proteins L3 and L19. In the 70S ribosome, L14 and L19 interact and together make contacts with the 16S rRNA in bridges B5 and B8.

In terms of biological role, binds to 23S rRNA. Forms part of two intersubunit bridges in the 70S ribosome. The sequence is that of Large ribosomal subunit protein uL14 from Flavobacterium psychrophilum (strain ATCC 49511 / DSM 21280 / CIP 103535 / JIP02/86).